The following is a 198-amino-acid chain: 7-methyl-GTP pyrophosphatase (198 aa).

The active-site Proton acceptor is Asp75.

This sequence belongs to the Maf family. YceF subfamily. A divalent metal cation is required as a cofactor.

Its subcellular location is the cytoplasm. The catalysed reaction is N(7)-methyl-GTP + H2O = N(7)-methyl-GMP + diphosphate + H(+). In terms of biological role, nucleoside triphosphate pyrophosphatase that hydrolyzes 7-methyl-GTP (m(7)GTP). May have a dual role in cell division arrest and in preventing the incorporation of modified nucleotides into cellular nucleic acids. In Bartonella henselae (strain ATCC 49882 / DSM 28221 / CCUG 30454 / Houston 1) (Rochalimaea henselae), this protein is 7-methyl-GTP pyrophosphatase.